Here is a 244-residue protein sequence, read N- to C-terminus: Derlin-2.2 (244 aa).

Topologically, residues 1–21 (MAQAVEEWYKQMPIITRSYLT) are cytoplasmic. The helical transmembrane segment at 22-42 (AAVITTVGCSLDIISPYNLYL) threads the bilayer. Topologically, residues 43–96 (NPTLVVKQYQYWRLVTNFLYFRKMDLDFMFHMFFLARYCKLLEENSFRGKTADF) are lumenal. Residues 97 to 117 (LYMLLFGASVLTGIVLIGGMI) traverse the membrane as a helical segment. Residues 118 to 121 (PYLS) are Cytoplasmic-facing. Residues 122–142 (ASFAKIIFLSNSLTFMMVYVW) traverse the membrane as a helical segment. The Lumenal portion of the chain corresponds to 143–152 (SKQNPYIHMS). The chain crosses the membrane as a helical span at residues 153–173 (FLGLFTFTAAYLPWVLLGFSI). At 174-244 (LVGASAWVDL…AAPFDEIHQD (71 aa)) the chain is on the cytoplasmic side.

The protein belongs to the derlin family.

The protein localises to the endoplasmic reticulum membrane. Its function is as follows. May be involved in the degradation process of specific misfolded endoplasmic reticulum (ER) luminal proteins. The polypeptide is Derlin-2.2 (DER2.2) (Arabidopsis thaliana (Mouse-ear cress)).